The chain runs to 241 residues: 1-Cys peroxiredoxin (241 aa).

The 157-residue stretch at 33–189 (LRIGDVVPDF…IIRILDSFQL (157 aa)) folds into the Thioredoxin domain. The Cysteine sulfenic acid (-SOH) intermediate role is filled by Cys-75.

This sequence belongs to the peroxiredoxin family. Prx6 subfamily. Homodimer.

It carries out the reaction a hydroperoxide + [thioredoxin]-dithiol = an alcohol + [thioredoxin]-disulfide + H2O. Its function is as follows. Thiol-specific peroxidase that catalyzes the reduction of hydrogen peroxide and organic hydroperoxides to water and alcohols, respectively. Plays a role in cell protection against oxidative stress by detoxifying peroxides. This Dictyostelium discoideum (Social amoeba) protein is 1-Cys peroxiredoxin.